Consider the following 143-residue polypeptide: Transcriptional regulator MraZ (143 aa).

2 SpoVT-AbrB domains span residues glutamate 5–glutamate 47 and alanine 76–lysine 119.

Belongs to the MraZ family. In terms of assembly, forms oligomers.

Its subcellular location is the cytoplasm. It is found in the nucleoid. In Syntrophomonas wolfei subsp. wolfei (strain DSM 2245B / Goettingen), this protein is Transcriptional regulator MraZ.